Consider the following 382-residue polypeptide: MRYLTAGESHGPQLTAIIEGLPSQLPLGTSDINPWLRKRQGGYGRGRRMVIETDEAQILSGVRAGRTTGAPVTLVIANKDHRNWTEIMSPEPGGEPRKKALTAARPGHADLTGGIKYRHKDLRDVLERASARETAARVAVGAVALKLLSELGVEGANYVASLGGIETRAPFSWDQLDAIEASDLRTPDADAAAQMRERIDQAKKDGDTLGGILEVRFRGLPVGLGSYVHWDRKLDGRIAQACLSVQAMKGVEIGRAFENAVQPGSRVHDAVYYREGTYVRDTNSAGGLEAGMTNGEELIVRVAMKPIATLMKPLPTVNVVTHEAADAARERSDTTAVPAAGVILQCVIGWVLAEAMLEKFGGDTLPELQERVQAARAYAQAY.

Residues Arg-39 and Arg-45 each coordinate NADP(+). FMN is bound by residues 128-130 (RAS), 246-247 (QA), Ala-290, 305-309 (KPIAT), and Arg-331.

The protein belongs to the chorismate synthase family. As to quaternary structure, homotetramer. FMNH2 serves as cofactor.

The catalysed reaction is 5-O-(1-carboxyvinyl)-3-phosphoshikimate = chorismate + phosphate. It functions in the pathway metabolic intermediate biosynthesis; chorismate biosynthesis; chorismate from D-erythrose 4-phosphate and phosphoenolpyruvate: step 7/7. Its function is as follows. Catalyzes the anti-1,4-elimination of the C-3 phosphate and the C-6 proR hydrogen from 5-enolpyruvylshikimate-3-phosphate (EPSP) to yield chorismate, which is the branch point compound that serves as the starting substrate for the three terminal pathways of aromatic amino acid biosynthesis. This reaction introduces a second double bond into the aromatic ring system. The polypeptide is Chorismate synthase (Deinococcus geothermalis (strain DSM 11300 / CIP 105573 / AG-3a)).